Here is a 193-residue protein sequence, read N- to C-terminus: Potassium-transporting ATPase KdpC subunit (193 aa).

A helical membrane pass occupies residues 14 to 34; sequence ITFTFLVLCGLVYPLIVTGIA.

The protein belongs to the KdpC family. As to quaternary structure, the system is composed of three essential subunits: KdpA, KdpB and KdpC.

Its subcellular location is the cell membrane. In terms of biological role, part of the high-affinity ATP-driven potassium transport (or Kdp) system, which catalyzes the hydrolysis of ATP coupled with the electrogenic transport of potassium into the cytoplasm. This subunit acts as a catalytic chaperone that increases the ATP-binding affinity of the ATP-hydrolyzing subunit KdpB by the formation of a transient KdpB/KdpC/ATP ternary complex. This is Potassium-transporting ATPase KdpC subunit from Bacillus anthracis (strain A0248).